Consider the following 266-residue polypeptide: Succinate dehydrogenase [ubiquinone] iron-sulfur subunit, mitochondrial (266 aa).

The transit peptide at Met1–Ala20 directs the protein to the mitochondrion. One can recognise a 2Fe-2S ferredoxin-type domain in the interval Phe36–Met127. Residues Cys87, Cys92, Cys95, and Cys107 each coordinate [2Fe-2S] cluster. In terms of domain architecture, 4Fe-4S ferredoxin-type spans Asp169–Tyr199. [4Fe-4S] cluster contacts are provided by Cys179, Cys182, and Cys185. Cys189 provides a ligand contact to [3Fe-4S] cluster. An a ubiquinone-binding site is contributed by Trp194. The [3Fe-4S] cluster site is built by Cys236 and Cys242. Cys246 is a binding site for [4Fe-4S] cluster.

Belongs to the succinate dehydrogenase/fumarate reductase iron-sulfur protein family. Component of complex II composed of four subunits: a flavoprotein (FP), an iron-sulfur protein (IP), and a cytochrome b composed of a large and a small subunit. [2Fe-2S] cluster is required as a cofactor. The cofactor is [3Fe-4S] cluster. [4Fe-4S] cluster serves as cofactor.

It is found in the mitochondrion inner membrane. It carries out the reaction a quinone + succinate = fumarate + a quinol. It participates in carbohydrate metabolism; tricarboxylic acid cycle; fumarate from succinate (eukaryal route): step 1/1. In terms of biological role, subunit of succinate dehydrogenase (SDH) that is involved in complex II of the mitochondrial electron transport chain and is responsible for transferring electrons from succinate to ubiquinone (coenzyme Q). SDH1 and SDH2 form the catalytic dimer. Electrons flow from succinate to the FAD bound to SDH1, and sequentially through the iron-sulfur clusters bound to SDH2 and enter the membrane dimer formed by SDH3 and SDH4. The polypeptide is Succinate dehydrogenase [ubiquinone] iron-sulfur subunit, mitochondrial (SDH2) (Saccharomyces cerevisiae (strain ATCC 204508 / S288c) (Baker's yeast)).